The sequence spans 246 residues: 14-3-3 protein beta/alpha (246 aa).

Methionine 1 bears the N-acetylmethionine mark. Residue threonine 2 is modified to N-acetylthreonine; in 14-3-3 protein beta/alpha, N-terminally processed. Threonine 2 carries the post-translational modification Phosphothreonine. Position 5 is an N6-acetyllysine (lysine 5). N6-acetyllysine; alternate is present on lysine 51. Residue lysine 51 forms a Glycyl lysine isopeptide (Lys-Gly) (interchain with G-Cter in SUMO2); alternate linkage. A Phosphoserine modification is found at serine 60. At lysine 70 the chain carries N6-acetyllysine. Residues tyrosine 84 and tyrosine 106 each carry the 3'-nitrotyrosine modification. Lysine 117 bears the N6-acetyllysine mark. A phosphoserine mark is found at serine 186 and serine 232.

Belongs to the 14-3-3 family. As to quaternary structure, homodimer. Interacts with SAMSN1 and PRKCE. Interacts with AKAP13. Interacts with SSH1 and TORC2/CRTC2. Interacts with ABL1; the interaction results in cytoplasmic location of ABL1 and inhibition of cABL-mediated apoptosis. Interacts with ROR2 (dimer); the interaction results in phosphorylation of YWHAB on tyrosine residues. Interacts with GAB2. Interacts with YAP1 (phosphorylated form). Interacts with the phosphorylated (by AKT1) form of SRPK2. Interacts with PKA-phosphorylated AANAT. Interacts with MYO1C. Interacts with SIRT2. Interacts with the 'Thr-369' phosphorylated form of DAPK2. Interacts with PI4KB, TBC1D22A and TBC1D22B. Interacts with the 'Ser-1134' and 'Ser-1161' phosphorylated form of SOS1. Interacts (via phosphorylated form) with YWHAB; this interaction occurs in a protein kinase AKT1-dependent manner. Interacts with SLITRK1. Interacts with SYNPO2 (phosphorylated form); YWHAB competes with ACTN2 for interaction with SYNPO2. Interacts with RIPOR2 (via phosphorylated form); this interaction occurs in a chemokine-dependent manner and does not compete for binding of RIPOR2 with RHOA nor blocks inhibition of RIPOR2-mediated RHOA activity. Interacts with MARK2 and MARK3. Interacts with TESK1; the interaction is dependent on the phosphorylation of TESK1 'Ser-439' and inhibits TESK1 kinase activity. Interacts with MEFV. Interacts with HDAC4. Interacts with ADAM22 (via C-terminus). Post-translationally, the alpha, brain-specific form differs from the beta form in being phosphorylated. Phosphorylated on Ser-60 by protein kinase C delta type catalytic subunit in a sphingosine-dependent fashion. In terms of processing, isoform Short contains a N-acetylmethionine at position 1.

The protein localises to the cytoplasm. Its subcellular location is the melanosome. Adapter protein implicated in the regulation of a large spectrum of both general and specialized signaling pathways. Binds to a large number of partners, usually by recognition of a phosphoserine or phosphothreonine motif. Binding generally results in the modulation of the activity of the binding partner. Negative regulator of osteogenesis. Blocks the nuclear translocation of the phosphorylated form (by AKT1) of SRPK2 and antagonizes its stimulatory effect on cyclin D1 expression resulting in blockage of neuronal apoptosis elicited by SRPK2. Negative regulator of signaling cascades that mediate activation of MAP kinases via AKAP13. In Rattus norvegicus (Rat), this protein is 14-3-3 protein beta/alpha (Ywhab).